A 1648-amino-acid chain; its full sequence is Vitellogenin-6 (1648 aa).

The signal sequence occupies residues 1 to 15 (MRFAVLLALFGLALA). The region spanning 26 to 691 (YRSGREYRYQ…SNDSVLPKEI (666 aa)) is the Vitellogenin domain. Disulfide bonds link C178-C203 and C219-C222. Residues N237, N371, and N683 are each glycosylated (N-linked (GlcNAc...) asparagine). The tract at residues 1070 to 1092 (EKNVEYEQEDKEPKSSQLQSQIR) is disordered. An N-linked (GlcNAc...) asparagine glycan is attached at N1295. The region spanning 1346-1514 (PECIVKSKEI…SYLSKDDECE (169 aa)) is the VWFD domain. 2 cysteine pairs are disulfide-bonded: C1348–C1477 and C1370–C1513. 2 N-linked (GlcNAc...) asparagine glycosylation sites follow: N1584 and N1617.

Post-translationally, the precursor protein is probably further processed into vitellin polypeptides VT2 and VT3. In terms of processing, both VT2 and VT3 polypeptides seem to be N-glycosylated.

It localises to the secreted. Its function is as follows. Precursor of the egg-yolk proteins that are sources of nutrients during embryonic development. The protein is Vitellogenin-6 (vit-6) of Oscheius tipulae.